The primary structure comprises 442 residues: 3-phosphoshikimate 1-carboxyvinyltransferase (442 aa).

Residues 1-11 (MQVSRPLTVSA) are compositionally biased toward polar residues. Residues 1–25 (MQVSRPLTVSASPKGLSGRTRVPGD) are disordered. Positions 26, 27, and 31 each coordinate 3-phosphoshikimate. Lys-26 lines the phosphoenolpyruvate pocket. Phosphoenolpyruvate contacts are provided by Gly-98 and Arg-126. 3-phosphoshikimate-binding residues include Ser-171, Gln-173, Asp-324, and Lys-351. Gln-173 is a binding site for phosphoenolpyruvate. Asp-324 serves as the catalytic Proton acceptor. Phosphoenolpyruvate is bound by residues Arg-355 and Arg-398.

This sequence belongs to the EPSP synthase family. As to quaternary structure, monomer.

The protein resides in the cytoplasm. The enzyme catalyses 3-phosphoshikimate + phosphoenolpyruvate = 5-O-(1-carboxyvinyl)-3-phosphoshikimate + phosphate. It participates in metabolic intermediate biosynthesis; chorismate biosynthesis; chorismate from D-erythrose 4-phosphate and phosphoenolpyruvate: step 6/7. Its function is as follows. Catalyzes the transfer of the enolpyruvyl moiety of phosphoenolpyruvate (PEP) to the 5-hydroxyl of shikimate-3-phosphate (S3P) to produce enolpyruvyl shikimate-3-phosphate and inorganic phosphate. This chain is 3-phosphoshikimate 1-carboxyvinyltransferase, found in Gluconobacter oxydans (strain 621H) (Gluconobacter suboxydans).